The primary structure comprises 170 residues: APRG1 tumor suppressor candidate (170 aa).

The chain crosses the membrane as a helical span at residues 150-170; it reads IALALAGPGAILILELSWFLG.

As to expression, expressed at high levels in the pancreas and placenta. In terms of tissue distribution, expressed at high levels in the kidney.

The protein localises to the membrane. The sequence is that of APRG1 tumor suppressor candidate from Homo sapiens (Human).